Consider the following 130-residue polypeptide: Small ribosomal subunit protein uS9 (130 aa).

Residues 109–130 (RMKERKKYGLKGARRAPQFSKR) form a disordered region. Residues 111–130 (KERKKYGLKGARRAPQFSKR) are compositionally biased toward basic residues.

It belongs to the universal ribosomal protein uS9 family.

In Listeria innocua serovar 6a (strain ATCC BAA-680 / CLIP 11262), this protein is Small ribosomal subunit protein uS9.